We begin with the raw amino-acid sequence, 325 residues long: Heat-inducible transcription repressor HrcA (325 aa).

Belongs to the HrcA family.

Negative regulator of class I heat shock genes (grpE-dnaK-dnaJ and groELS operons). Prevents heat-shock induction of these operons. This chain is Heat-inducible transcription repressor HrcA, found in Staphylococcus haemolyticus (strain JCSC1435).